We begin with the raw amino-acid sequence, 503 residues long: Cobyric acid synthase (503 aa).

Positions 251–450 (DLDIAVIRLP…IHGIFENAAF (200 aa)) constitute a GATase cobBQ-type domain. Cys331 acts as the Nucleophile in catalysis. The active site involves His442.

The protein belongs to the CobB/CobQ family. CobQ subfamily.

Its pathway is cofactor biosynthesis; adenosylcobalamin biosynthesis. Functionally, catalyzes amidations at positions B, D, E, and G on adenosylcobyrinic A,C-diamide. NH(2) groups are provided by glutamine, and one molecule of ATP is hydrogenolyzed for each amidation. This chain is Cobyric acid synthase, found in Dehalococcoides mccartyi (strain CBDB1).